The chain runs to 411 residues: S-inosyl-L-homocysteine hydrolase (411 aa).

The substrate site is built by Asp121 and Glu146. 147–149 lines the NAD(+) pocket; it reads TTT. Residues Lys176 and Asp180 each coordinate substrate. Residues Asn181, 210-215, Glu233, Asn268, 289-291, and Asn335 each bind NAD(+); these read GYGWCG and SGH.

The protein belongs to the adenosylhomocysteinase family. NAD(+) is required as a cofactor.

The protein localises to the cytoplasm. The catalysed reaction is S-inosyl-L-homocysteine + H2O = L-homocysteine + inosine. It participates in amino-acid biosynthesis; S-adenosyl-L-methionine biosynthesis. Functionally, catalyzes the hydrolysis of S-inosyl-L-homocysteine (SIH) to L-homocysteine (Hcy) and inosine. Likely functions in a S-adenosyl-L-methionine (SAM) recycling pathway from S-adenosyl-L-homocysteine (SAH) produced from SAM-dependent methylation reactions. Can also catalyze the reverse reaction in vitro, i.e. the synthesis of SIH from Hcy and inosine. The polypeptide is S-inosyl-L-homocysteine hydrolase (Methanosarcina acetivorans (strain ATCC 35395 / DSM 2834 / JCM 12185 / C2A)).